The primary structure comprises 150 residues: Endoribonuclease YbeY (150 aa).

Zn(2+)-binding residues include histidine 112, histidine 116, and histidine 122.

It belongs to the endoribonuclease YbeY family. The cofactor is Zn(2+).

The protein localises to the cytoplasm. In terms of biological role, single strand-specific metallo-endoribonuclease involved in late-stage 70S ribosome quality control and in maturation of the 3' terminus of the 16S rRNA. The polypeptide is Endoribonuclease YbeY (Geobacter metallireducens (strain ATCC 53774 / DSM 7210 / GS-15)).